A 130-amino-acid chain; its full sequence is Small ribosomal subunit protein uS11 (130 aa).

It belongs to the universal ribosomal protein uS11 family. As to quaternary structure, part of the 30S ribosomal subunit. Interacts with proteins S7 and S18. Binds to IF-3.

In terms of biological role, located on the platform of the 30S subunit, it bridges several disparate RNA helices of the 16S rRNA. Forms part of the Shine-Dalgarno cleft in the 70S ribosome. The chain is Small ribosomal subunit protein uS11 from Shewanella violacea (strain JCM 10179 / CIP 106290 / LMG 19151 / DSS12).